The sequence spans 385 residues: Serine/threonine-protein kinase SBK1 (385 aa).

The region spanning 32 to 297 (YEVIRELGKG…VFAHLGHRWM (266 aa)) is the Protein kinase domain. Residues 38-46 (LGKGTYGKV) and lysine 61 contribute to the ATP site. Aspartate 153 functions as the Proton acceptor in the catalytic mechanism. Over residues 328–338 (TLSPTANTSNA) the composition is skewed to polar residues. Positions 328–374 (TLSPTANTSNAIEPGSANHFTSMSTNSSVSSTNSYERSARDSPPTSR) are disordered. Residues 348–361 (TSMSTNSSVSSTNS) show a composition bias toward low complexity.

Belongs to the protein kinase superfamily. Ser/Thr protein kinase family. In terms of tissue distribution, mainly expressed in brain.

It localises to the cytoplasm. It catalyses the reaction L-seryl-[protein] + ATP = O-phospho-L-seryl-[protein] + ADP + H(+). The enzyme catalyses L-threonyl-[protein] + ATP = O-phospho-L-threonyl-[protein] + ADP + H(+). Its function is as follows. May be involved in the control of neuronal proliferation or migration in the brain of embryos. This is Serine/threonine-protein kinase SBK1 (sbk1) from Danio rerio (Zebrafish).